The chain runs to 643 residues: Extracellular metalloproteinase 4 (643 aa).

Residues 1 to 18 (MHGLMLAGLLALPLSVLG) form the signal peptide. A propeptide spanning residues 19 to 254 (HPTESHSSGI…VHSVVDYVSA (236 aa)) is cleaved from the precursor. Residues 47 to 57 (TKSDAVPKQDG) show a composition bias toward basic and acidic residues. The interval 47-73 (TKSDAVPKQDGESFTTSSTGNDNSSSG) is disordered. Positions 61–73 (TTSSTGNDNSSSG) are enriched in low complexity. Asn-271 and Asn-420 each carry an N-linked (GlcNAc...) asparagine glycan. His-437 is a binding site for Zn(2+). Glu-438 is an active-site residue. Zn(2+) is bound at residue His-441. N-linked (GlcNAc...) asparagine glycosylation is found at Asn-603 and Asn-629.

The protein belongs to the peptidase M36 family. The cofactor is Zn(2+).

It localises to the secreted. In terms of biological role, secreted metalloproteinase probably acting as a virulence factor. The chain is Extracellular metalloproteinase 4 (MEP4) from Trichophyton rubrum (Athlete's foot fungus).